The chain runs to 58 residues: Small ribosomal subunit protein bS21 (58 aa).

It belongs to the bacterial ribosomal protein bS21 family.

In Lacticaseibacillus paracasei (strain ATCC 334 / BCRC 17002 / CCUG 31169 / CIP 107868 / KCTC 3260 / NRRL B-441) (Lactobacillus paracasei), this protein is Small ribosomal subunit protein bS21.